The primary structure comprises 190 residues: Protein GrpE (190 aa).

Positions 1-18 (MTETPNTSSEEIQTSEPS) are enriched in polar residues. The disordered stretch occupies residues 1-21 (MTETPNTSSEEIQTSEPSPDN).

This sequence belongs to the GrpE family. Homodimer.

The protein localises to the cytoplasm. Functionally, participates actively in the response to hyperosmotic and heat shock by preventing the aggregation of stress-denatured proteins, in association with DnaK and GrpE. It is the nucleotide exchange factor for DnaK and may function as a thermosensor. Unfolded proteins bind initially to DnaJ; upon interaction with the DnaJ-bound protein, DnaK hydrolyzes its bound ATP, resulting in the formation of a stable complex. GrpE releases ADP from DnaK; ATP binding to DnaK triggers the release of the substrate protein, thus completing the reaction cycle. Several rounds of ATP-dependent interactions between DnaJ, DnaK and GrpE are required for fully efficient folding. This chain is Protein GrpE, found in Chlamydia trachomatis serovar L2b (strain UCH-1/proctitis).